A 229-amino-acid chain; its full sequence is MSLLEQLDKNIAASGGLIVSCQPVPGSPLDKPEIVAAMALAAEQAGAVAVRIEGIDNLRVARSLVSVPIIGIIKRDLDESPVRITPFLDDVDALAQAGANIIAIDGTARQRPVTVEALLARIHHHHLLAMADCSSVDDGLACQRLGADIIGTTMSGYTTPDTPEEPDLPLVKALHDAGCRVIAEGRYNSPELAAKAIRYGAWAVTVGSAITRLEYICGWYNDALKKAAS.

It belongs to the NanE family.

It carries out the reaction an N-acyl-D-glucosamine 6-phosphate = an N-acyl-D-mannosamine 6-phosphate. It participates in amino-sugar metabolism; N-acetylneuraminate degradation; D-fructose 6-phosphate from N-acetylneuraminate: step 3/5. Functionally, converts N-acetylmannosamine-6-phosphate (ManNAc-6-P) to N-acetylglucosamine-6-phosphate (GlcNAc-6-P). This chain is Putative N-acetylmannosamine-6-phosphate 2-epimerase, found in Salmonella arizonae (strain ATCC BAA-731 / CDC346-86 / RSK2980).